A 353-amino-acid chain; its full sequence is 3-dehydroquinate synthase (353 aa).

NAD(+) is bound by residues 62–67, 96–100, 120–121, lysine 133, and lysine 142; these read DGEQYK, GVIGD, and TT. 3 residues coordinate Zn(2+): glutamate 175, histidine 236, and histidine 253.

This sequence belongs to the sugar phosphate cyclases superfamily. Dehydroquinate synthase family. The cofactor is NAD(+). Requires Co(2+) as cofactor. Zn(2+) is required as a cofactor.

The protein localises to the cytoplasm. It carries out the reaction 7-phospho-2-dehydro-3-deoxy-D-arabino-heptonate = 3-dehydroquinate + phosphate. It participates in metabolic intermediate biosynthesis; chorismate biosynthesis; chorismate from D-erythrose 4-phosphate and phosphoenolpyruvate: step 2/7. Catalyzes the conversion of 3-deoxy-D-arabino-heptulosonate 7-phosphate (DAHP) to dehydroquinate (DHQ). This Helicobacter hepaticus (strain ATCC 51449 / 3B1) protein is 3-dehydroquinate synthase.